We begin with the raw amino-acid sequence, 213 residues long: Probable nicotinate-nucleotide adenylyltransferase (213 aa).

Residues 194–213 (RKPNNGEAKDGDVKDEEAVR) form a disordered region. Positions 200–213 (EAKDGDVKDEEAVR) are enriched in basic and acidic residues.

It belongs to the NadD family.

The catalysed reaction is nicotinate beta-D-ribonucleotide + ATP + H(+) = deamido-NAD(+) + diphosphate. The protein operates within cofactor biosynthesis; NAD(+) biosynthesis; deamido-NAD(+) from nicotinate D-ribonucleotide: step 1/1. Functionally, catalyzes the reversible adenylation of nicotinate mononucleotide (NaMN) to nicotinic acid adenine dinucleotide (NaAD). The sequence is that of Probable nicotinate-nucleotide adenylyltransferase from Mycolicibacterium smegmatis (strain ATCC 700084 / mc(2)155) (Mycobacterium smegmatis).